The following is a 283-amino-acid chain: Acetylglutamate kinase (283 aa).

Substrate contacts are provided by residues 64–65 (GG), arginine 86, and asparagine 181.

It belongs to the acetylglutamate kinase family. ArgB subfamily.

It is found in the cytoplasm. It carries out the reaction N-acetyl-L-glutamate + ATP = N-acetyl-L-glutamyl 5-phosphate + ADP. The protein operates within amino-acid biosynthesis; L-arginine biosynthesis; N(2)-acetyl-L-ornithine from L-glutamate: step 2/4. Its function is as follows. Catalyzes the ATP-dependent phosphorylation of N-acetyl-L-glutamate. This Sulfurimonas denitrificans (strain ATCC 33889 / DSM 1251) (Thiomicrospira denitrificans (strain ATCC 33889 / DSM 1251)) protein is Acetylglutamate kinase.